We begin with the raw amino-acid sequence, 248 residues long: 4-hydroxy-tetrahydrodipicolinate reductase (248 aa).

Residues D32, 74–76 (GTT), and 99–102 (SANF) contribute to the NAD(+) site. The Proton donor/acceptor role is filled by H134. Residue H135 coordinates (S)-2,3,4,5-tetrahydrodipicolinate. The Proton donor role is filled by K138. Residue 144–145 (GT) coordinates (S)-2,3,4,5-tetrahydrodipicolinate.

The protein belongs to the DapB family.

The protein localises to the cytoplasm. It catalyses the reaction (S)-2,3,4,5-tetrahydrodipicolinate + NAD(+) + H2O = (2S,4S)-4-hydroxy-2,3,4,5-tetrahydrodipicolinate + NADH + H(+). It carries out the reaction (S)-2,3,4,5-tetrahydrodipicolinate + NADP(+) + H2O = (2S,4S)-4-hydroxy-2,3,4,5-tetrahydrodipicolinate + NADPH + H(+). It functions in the pathway amino-acid biosynthesis; L-lysine biosynthesis via DAP pathway; (S)-tetrahydrodipicolinate from L-aspartate: step 4/4. Its function is as follows. Catalyzes the conversion of 4-hydroxy-tetrahydrodipicolinate (HTPA) to tetrahydrodipicolinate. This Chlorobium luteolum (strain DSM 273 / BCRC 81028 / 2530) (Pelodictyon luteolum) protein is 4-hydroxy-tetrahydrodipicolinate reductase.